Here is a 305-residue protein sequence, read N- to C-terminus: GMP synthase [glutamine-hydrolyzing] subunit B (305 aa).

In terms of domain architecture, GMPS ATP-PPase spans 2-184 (VKTEKFIQKS…LGLPPEIQHR (183 aa)). 29–35 (SGGVDSS) contacts ATP.

In terms of assembly, heterodimer composed of a glutamine amidotransferase subunit (A) and a GMP-binding subunit (B).

It carries out the reaction XMP + L-glutamine + ATP + H2O = GMP + L-glutamate + AMP + diphosphate + 2 H(+). Its pathway is purine metabolism; GMP biosynthesis; GMP from XMP (L-Gln route): step 1/1. Functionally, catalyzes the synthesis of GMP from XMP. This Methanoregula boonei (strain DSM 21154 / JCM 14090 / 6A8) protein is GMP synthase [glutamine-hydrolyzing] subunit B.